We begin with the raw amino-acid sequence, 214 residues long: Zinc finger protein 11 (214 aa).

The interval 1–27 (MKRTHLASFSNRDKTQEEEGEDGNGDN) is disordered. A C2H2-type zinc finger spans residues 49-71 (YTCSFCRREFRSAQALGGHMNVH). Residues 72–79 (RRDRAKLR) carry the Nuclear localization signal motif. Positions 89 to 130 (HHHTPIANPNPNFSSSSSSSTTTAHLEPSLTNQRSKTTPFPS) are disordered. Residues 102–111 (SSSSSSSTTT) show a composition bias toward low complexity. Polar residues predominate over residues 117–128 (SLTNQRSKTTPF).

As to expression, expressed in roots, stems, axillary buds and flowers.

It is found in the nucleus. Its function is as follows. Probable transcription factor that may regulate cell division and growth. This is Zinc finger protein 11 from Arabidopsis thaliana (Mouse-ear cress).